The chain runs to 195 residues: Putative NADH dehydrogenase/NAD(P)H nitroreductase Bcep18194_B1060 (195 aa).

The protein belongs to the nitroreductase family. HadB/RutE subfamily. Requires FMN as cofactor.

This is Putative NADH dehydrogenase/NAD(P)H nitroreductase Bcep18194_B1060 from Burkholderia lata (strain ATCC 17760 / DSM 23089 / LMG 22485 / NCIMB 9086 / R18194 / 383).